Here is a 395-residue protein sequence, read N- to C-terminus: Elongation factor Tu (395 aa).

The 196-residue stretch at 10–205 (KPHVNIGTIG…CDTWIPLPPR (196 aa)) folds into the tr-type G domain. The interval 19 to 26 (GHVDHGKT) is G1. 19–26 (GHVDHGKT) contributes to the GTP binding site. A Mg(2+)-binding site is contributed by Thr-26. The interval 60-64 (GITIN) is G2. The segment at 81–84 (DCPG) is G3. GTP contacts are provided by residues 81–85 (DCPGH) and 136–139 (NKCD). Positions 136–139 (NKCD) are G4. The G5 stretch occupies residues 174–176 (SAL).

The protein belongs to the TRAFAC class translation factor GTPase superfamily. Classic translation factor GTPase family. EF-Tu/EF-1A subfamily. In terms of assembly, monomer.

The protein localises to the cytoplasm. The enzyme catalyses GTP + H2O = GDP + phosphate + H(+). In terms of biological role, GTP hydrolase that promotes the GTP-dependent binding of aminoacyl-tRNA to the A-site of ribosomes during protein biosynthesis. The polypeptide is Elongation factor Tu (Parabacteroides distasonis (strain ATCC 8503 / DSM 20701 / CIP 104284 / JCM 5825 / NCTC 11152)).